We begin with the raw amino-acid sequence, 446 residues long: Bifunctional protein GlmU (446 aa).

The pyrophosphorylase stretch occupies residues 1–225 (MEGIILAAGK…ETEVYGVNDR (225 aa)). Residues 6–9 (LAAG), lysine 20, glutamine 70, and 75–76 (GT) each bind UDP-N-acetyl-alpha-D-glucosamine. Residue aspartate 98 coordinates Mg(2+). The UDP-N-acetyl-alpha-D-glucosamine site is built by glycine 135, glutamate 150, asparagine 165, and asparagine 223. Residue asparagine 223 coordinates Mg(2+). Positions 226–246 (VQLARLTKGVYRRKAEALMQE) are linker. Residues 247 to 446 (GVTIIDPETV…RQVNKEDYVK (200 aa)) are N-acetyltransferase. 2 residues coordinate UDP-N-acetyl-alpha-D-glucosamine: arginine 328 and lysine 346. The active-site Proton acceptor is histidine 358. Residues tyrosine 361 and asparagine 372 each coordinate UDP-N-acetyl-alpha-D-glucosamine. Acetyl-CoA is bound by residues alanine 375, 381-382 (NY), serine 400, alanine 418, and arginine 435.

It in the N-terminal section; belongs to the N-acetylglucosamine-1-phosphate uridyltransferase family. The protein in the C-terminal section; belongs to the transferase hexapeptide repeat family. Homotrimer. The cofactor is Mg(2+).

The protein resides in the cytoplasm. It catalyses the reaction alpha-D-glucosamine 1-phosphate + acetyl-CoA = N-acetyl-alpha-D-glucosamine 1-phosphate + CoA + H(+). The catalysed reaction is N-acetyl-alpha-D-glucosamine 1-phosphate + UTP + H(+) = UDP-N-acetyl-alpha-D-glucosamine + diphosphate. The protein operates within nucleotide-sugar biosynthesis; UDP-N-acetyl-alpha-D-glucosamine biosynthesis; N-acetyl-alpha-D-glucosamine 1-phosphate from alpha-D-glucosamine 6-phosphate (route II): step 2/2. It participates in nucleotide-sugar biosynthesis; UDP-N-acetyl-alpha-D-glucosamine biosynthesis; UDP-N-acetyl-alpha-D-glucosamine from N-acetyl-alpha-D-glucosamine 1-phosphate: step 1/1. It functions in the pathway bacterial outer membrane biogenesis; LPS lipid A biosynthesis. Catalyzes the last two sequential reactions in the de novo biosynthetic pathway for UDP-N-acetylglucosamine (UDP-GlcNAc). The C-terminal domain catalyzes the transfer of acetyl group from acetyl coenzyme A to glucosamine-1-phosphate (GlcN-1-P) to produce N-acetylglucosamine-1-phosphate (GlcNAc-1-P), which is converted into UDP-GlcNAc by the transfer of uridine 5-monophosphate (from uridine 5-triphosphate), a reaction catalyzed by the N-terminal domain. This Carboxydothermus hydrogenoformans (strain ATCC BAA-161 / DSM 6008 / Z-2901) protein is Bifunctional protein GlmU.